Reading from the N-terminus, the 366-residue chain is uncharacterized protein (366 aa).

6 helical membrane passes run Ile164–Ile184, Ile188–Leu208, Val223–Leu243, Phe256–Met276, Phe299–Leu319, and Phe325–Ile345.

It to A.fulgidus AF2058.

The protein resides in the cell membrane. This is an uncharacterized protein from Methanocaldococcus jannaschii (strain ATCC 43067 / DSM 2661 / JAL-1 / JCM 10045 / NBRC 100440) (Methanococcus jannaschii).